The chain runs to 311 residues: Mitochondrial FAD carrier protein FLX1 (311 aa).

Solcar repeat units lie at residues 7 to 101, 123 to 210, and 224 to 310; these read TPLQ…TKEL, MNSL…LKQR, and LTNL…LKHR. The next 6 membrane-spanning stretches (helical) occupy residues 13–33, 77–97, 129–149, 183–203, 230–250, and 266–286; these read VISG…LDLL, LSIN…LYGV, LSAG…IWVI, LWKG…YFAV, IEIT…FQLL, and LFPL…YKGL.

The protein belongs to the mitochondrial carrier (TC 2.A.29) family.

The protein localises to the mitochondrion inner membrane. Its function is as follows. Transport of FAD from the cytosol to the mitochondrial matrix. The protein is Mitochondrial FAD carrier protein FLX1 (FLX1) of Saccharomyces cerevisiae (strain ATCC 204508 / S288c) (Baker's yeast).